The following is a 556-amino-acid chain: 2-succinyl-5-enolpyruvyl-6-hydroxy-3-cyclohexene-1-carboxylate synthase (556 aa).

Belongs to the TPP enzyme family. MenD subfamily. In terms of assembly, homodimer. The cofactor is Mg(2+). Requires Mn(2+) as cofactor. Thiamine diphosphate is required as a cofactor.

The enzyme catalyses isochorismate + 2-oxoglutarate + H(+) = 5-enolpyruvoyl-6-hydroxy-2-succinyl-cyclohex-3-ene-1-carboxylate + CO2. It participates in quinol/quinone metabolism; 1,4-dihydroxy-2-naphthoate biosynthesis; 1,4-dihydroxy-2-naphthoate from chorismate: step 2/7. Its pathway is quinol/quinone metabolism; menaquinone biosynthesis. Catalyzes the thiamine diphosphate-dependent decarboxylation of 2-oxoglutarate and the subsequent addition of the resulting succinic semialdehyde-thiamine pyrophosphate anion to isochorismate to yield 2-succinyl-5-enolpyruvyl-6-hydroxy-3-cyclohexene-1-carboxylate (SEPHCHC). This is 2-succinyl-5-enolpyruvyl-6-hydroxy-3-cyclohexene-1-carboxylate synthase from Salmonella paratyphi A (strain AKU_12601).